Here is a 426-residue protein sequence, read N- to C-terminus: Serine--tRNA ligase (426 aa).

231–233 is an L-serine binding site; the sequence is TLE. An ATP-binding site is contributed by 262–264; it reads RSE. E285 contacts L-serine. 349–352 contacts ATP; that stretch reads EISS. S385 is a binding site for L-serine.

The protein belongs to the class-II aminoacyl-tRNA synthetase family. Type-1 seryl-tRNA synthetase subfamily. As to quaternary structure, homodimer. The tRNA molecule binds across the dimer.

Its subcellular location is the cytoplasm. It catalyses the reaction tRNA(Ser) + L-serine + ATP = L-seryl-tRNA(Ser) + AMP + diphosphate + H(+). It carries out the reaction tRNA(Sec) + L-serine + ATP = L-seryl-tRNA(Sec) + AMP + diphosphate + H(+). It functions in the pathway aminoacyl-tRNA biosynthesis; selenocysteinyl-tRNA(Sec) biosynthesis; L-seryl-tRNA(Sec) from L-serine and tRNA(Sec): step 1/1. Its function is as follows. Catalyzes the attachment of serine to tRNA(Ser). Is also able to aminoacylate tRNA(Sec) with serine, to form the misacylated tRNA L-seryl-tRNA(Sec), which will be further converted into selenocysteinyl-tRNA(Sec). The chain is Serine--tRNA ligase from Malacoplasma penetrans (strain HF-2) (Mycoplasma penetrans).